A 460-amino-acid chain; its full sequence is Cysteine--tRNA ligase (460 aa).

A Zn(2+)-binding site is contributed by C28. Residues 30–40 (MTVYDYCHLGH) carry the 'HIGH' region motif. The Zn(2+) site is built by C209, H234, and E238. The 'KMSKS' region motif lies at 266–270 (KMSKS). An ATP-binding site is contributed by K269.

This sequence belongs to the class-I aminoacyl-tRNA synthetase family. In terms of assembly, monomer. The cofactor is Zn(2+).

The protein localises to the cytoplasm. It carries out the reaction tRNA(Cys) + L-cysteine + ATP = L-cysteinyl-tRNA(Cys) + AMP + diphosphate. This Pseudomonas putida (strain ATCC 47054 / DSM 6125 / CFBP 8728 / NCIMB 11950 / KT2440) protein is Cysteine--tRNA ligase.